The following is a 152-amino-acid chain: Acidic phospholipase A2 S16-19 (152 aa).

The signal sequence occupies residues 1-19 (MYPAHLLVLLAVCVSLLGA). Positions 20 to 27 (SNIPLPSL) are excised as a propeptide. Disulfide bonds link C38-C104, C54-C151, C71-C132, C78-C125, C88-C118, and C111-C123. 3 residues coordinate Ca(2+): Y55, G57, and G59. H75 is an active-site residue. D76 lines the Ca(2+) pocket. D126 is an active-site residue.

The protein belongs to the phospholipase A2 family. Group I subfamily. D49 sub-subfamily. Requires Ca(2+) as cofactor. Post-translationally, this enzyme lacks one of the seven disulfide bonds found in similar PLA2 proteins. Expressed by the venom gland.

It localises to the secreted. The catalysed reaction is a 1,2-diacyl-sn-glycero-3-phosphocholine + H2O = a 1-acyl-sn-glycero-3-phosphocholine + a fatty acid + H(+). Functionally, snake venom phospholipase A2 (PLA2) that inhibits collagen-induced platelet aggregation. PLA2 catalyzes the calcium-dependent hydrolysis of the 2-acyl groups in 3-sn-phosphoglycerides. This chain is Acidic phospholipase A2 S16-19, found in Austrelaps superbus (Lowland copperhead snake).